Here is a 387-residue protein sequence, read N- to C-terminus: Queuine tRNA-ribosyltransferase (387 aa).

Residue Asp-102 is the Proton acceptor of the active site. Substrate contacts are provided by residues 102–106 (DSGGF), Asp-156, Gln-205, and Gly-232. An RNA binding region spans residues 263-269 (GVGTPED). Asp-282 (nucleophile) is an active-site residue. The interval 287-291 (TRNAR) is RNA binding; important for wobble base 34 recognition. Residues Cys-320, Cys-322, Cys-325, and His-351 each coordinate Zn(2+).

This sequence belongs to the queuine tRNA-ribosyltransferase family. In terms of assembly, homodimer. Within each dimer, one monomer is responsible for RNA recognition and catalysis, while the other monomer binds to the replacement base PreQ1. Zn(2+) is required as a cofactor.

It carries out the reaction 7-aminomethyl-7-carbaguanine + guanosine(34) in tRNA = 7-aminomethyl-7-carbaguanosine(34) in tRNA + guanine. It functions in the pathway tRNA modification; tRNA-queuosine biosynthesis. Catalyzes the base-exchange of a guanine (G) residue with the queuine precursor 7-aminomethyl-7-deazaguanine (PreQ1) at position 34 (anticodon wobble position) in tRNAs with GU(N) anticodons (tRNA-Asp, -Asn, -His and -Tyr). Catalysis occurs through a double-displacement mechanism. The nucleophile active site attacks the C1' of nucleotide 34 to detach the guanine base from the RNA, forming a covalent enzyme-RNA intermediate. The proton acceptor active site deprotonates the incoming PreQ1, allowing a nucleophilic attack on the C1' of the ribose to form the product. After dissociation, two additional enzymatic reactions on the tRNA convert PreQ1 to queuine (Q), resulting in the hypermodified nucleoside queuosine (7-(((4,5-cis-dihydroxy-2-cyclopenten-1-yl)amino)methyl)-7-deazaguanosine). The sequence is that of Queuine tRNA-ribosyltransferase from Polaromonas naphthalenivorans (strain CJ2).